The sequence spans 464 residues: MTVKTRFAPSPTGYLHIGGVRTALFSWAFARHHKGEFLLRIEDTDLARSTAESVNIILDGMKWVGLDYDNADNVVYQTRRFDRYKEVIAELLAKGDAYYCYCSKEELEAMREKAEKEGTATYDRRWRPEAGKTLPEIPAGVQPVVRFKTPLDGVTKWTDLVKGEISIPNEALDDLIIARADGTPTYNFCAVVDDYDMGVTHIIRGDDHVNNTPKQINILKAIGANLPEYGHLPMILNEQGKKISKRSGDTVAITDFGAMGILPEAMLNYLARLGWAHGDDEFFTTEQFIEWFDLKDVSPSPSRMDLKKLYWINGEHIKITPDGKLTELVKPRLALRDIHETEKPALEDVLALVKDRAQDLNALADECLYFYKKQVPAEADVAKHWDDEAAARMLRFAERLEGLEDWNAKAIHDLFKPFCDEEGIKMGKLGMPLRLAVCGTAKTPSVDAVLALISKEEVLKRIRA.

Residues P9 to G19 carry the 'HIGH' region motif. A 'KMSKS' region motif is present at residues K242–R246. Position 245 (K245) interacts with ATP.

The protein belongs to the class-I aminoacyl-tRNA synthetase family. Glutamate--tRNA ligase type 1 subfamily. In terms of assembly, monomer.

The protein resides in the cytoplasm. It carries out the reaction tRNA(Glu) + L-glutamate + ATP = L-glutamyl-tRNA(Glu) + AMP + diphosphate. Catalyzes the attachment of glutamate to tRNA(Glu) in a two-step reaction: glutamate is first activated by ATP to form Glu-AMP and then transferred to the acceptor end of tRNA(Glu). The polypeptide is Glutamate--tRNA ligase (Neisseria gonorrhoeae (strain NCCP11945)).